Here is a 194-residue protein sequence, read N- to C-terminus: Peptidyl-tRNA hydrolase (194 aa).

A tRNA-binding site is contributed by tyrosine 16. Histidine 21 functions as the Proton acceptor in the catalytic mechanism. TRNA contacts are provided by phenylalanine 67, asparagine 69, and asparagine 115.

It belongs to the PTH family. As to quaternary structure, monomer.

Its subcellular location is the cytoplasm. The catalysed reaction is an N-acyl-L-alpha-aminoacyl-tRNA + H2O = an N-acyl-L-amino acid + a tRNA + H(+). In terms of biological role, hydrolyzes ribosome-free peptidyl-tRNAs (with 1 or more amino acids incorporated), which drop off the ribosome during protein synthesis, or as a result of ribosome stalling. Functionally, catalyzes the release of premature peptidyl moieties from peptidyl-tRNA molecules trapped in stalled 50S ribosomal subunits, and thus maintains levels of free tRNAs and 50S ribosomes. The protein is Peptidyl-tRNA hydrolase of Klebsiella pneumoniae (strain 342).